The chain runs to 75 residues: MQKRPAFDSSHIMYRAEELMSHASNRYRITVQVANRAKRRRYEEFDNIDDPMMKPTIRAIIEMSDEISQDDIISD.

This sequence belongs to the RNA polymerase subunit omega family. As to quaternary structure, in cyanobacteria the RNAP catalytic core is composed of 2 alpha, 1 beta, 1 beta', 1 gamma and 1 omega subunit. When a sigma factor is associated with the core the holoenzyme is formed, which can initiate transcription.

The enzyme catalyses RNA(n) + a ribonucleoside 5'-triphosphate = RNA(n+1) + diphosphate. Promotes RNA polymerase assembly. Latches the N- and C-terminal regions of the beta' subunit thereby facilitating its interaction with the beta and alpha subunits. The chain is DNA-directed RNA polymerase subunit omega from Gloeothece citriformis (strain PCC 7424) (Cyanothece sp. (strain PCC 7424)).